A 297-amino-acid chain; its full sequence is 4-hydroxy-tetrahydrodipicolinate synthase (297 aa).

A pyruvate-binding site is contributed by threonine 47. The Proton donor/acceptor role is filled by tyrosine 136. Lysine 165 (schiff-base intermediate with substrate) is an active-site residue. Isoleucine 206 contacts pyruvate.

It belongs to the DapA family. In terms of assembly, homotetramer; dimer of dimers.

The protein resides in the cytoplasm. The enzyme catalyses L-aspartate 4-semialdehyde + pyruvate = (2S,4S)-4-hydroxy-2,3,4,5-tetrahydrodipicolinate + H2O + H(+). It functions in the pathway amino-acid biosynthesis; L-lysine biosynthesis via DAP pathway; (S)-tetrahydrodipicolinate from L-aspartate: step 3/4. Functionally, catalyzes the condensation of (S)-aspartate-beta-semialdehyde [(S)-ASA] and pyruvate to 4-hydroxy-tetrahydrodipicolinate (HTPA). This is 4-hydroxy-tetrahydrodipicolinate synthase from Campylobacter curvus (strain 525.92).